A 211-amino-acid polypeptide reads, in one-letter code: Large ribosomal subunit protein uL3 (211 aa).

Residue Gln-151 is modified to N5-methylglutamine.

This sequence belongs to the universal ribosomal protein uL3 family. Part of the 50S ribosomal subunit. Forms a cluster with proteins L14 and L19. Post-translationally, methylated by PrmB.

One of the primary rRNA binding proteins, it binds directly near the 3'-end of the 23S rRNA, where it nucleates assembly of the 50S subunit. The protein is Large ribosomal subunit protein uL3 of Francisella tularensis subsp. tularensis (strain FSC 198).